Here is a 349-residue protein sequence, read N- to C-terminus: Holliday junction branch migration complex subunit RuvB (349 aa).

The segment at 1–183 (MTDPSRLVTP…FGIPIRLNFY (183 aa)) is large ATPase domain (RuvB-L). ATP contacts are provided by residues L22, R23, G64, K67, T68, T69, 130-132 (EDF), R173, Y183, and R220. A Mg(2+)-binding site is contributed by T68. The interval 184–254 (TIEELESIVT…IADHALGALE (71 aa)) is small ATPAse domain (RuvB-S). Residues 257–349 (SAGLDAMDRR…GLFGDTGDQE (93 aa)) are head domain (RuvB-H). Residues R293, R312, and R317 each contribute to the DNA site.

Belongs to the RuvB family. Homohexamer. Forms an RuvA(8)-RuvB(12)-Holliday junction (HJ) complex. HJ DNA is sandwiched between 2 RuvA tetramers; dsDNA enters through RuvA and exits via RuvB. An RuvB hexamer assembles on each DNA strand where it exits the tetramer. Each RuvB hexamer is contacted by two RuvA subunits (via domain III) on 2 adjacent RuvB subunits; this complex drives branch migration. In the full resolvosome a probable DNA-RuvA(4)-RuvB(12)-RuvC(2) complex forms which resolves the HJ.

The protein localises to the cytoplasm. The catalysed reaction is ATP + H2O = ADP + phosphate + H(+). In terms of biological role, the RuvA-RuvB-RuvC complex processes Holliday junction (HJ) DNA during genetic recombination and DNA repair, while the RuvA-RuvB complex plays an important role in the rescue of blocked DNA replication forks via replication fork reversal (RFR). RuvA specifically binds to HJ cruciform DNA, conferring on it an open structure. The RuvB hexamer acts as an ATP-dependent pump, pulling dsDNA into and through the RuvAB complex. RuvB forms 2 homohexamers on either side of HJ DNA bound by 1 or 2 RuvA tetramers; 4 subunits per hexamer contact DNA at a time. Coordinated motions by a converter formed by DNA-disengaged RuvB subunits stimulates ATP hydrolysis and nucleotide exchange. Immobilization of the converter enables RuvB to convert the ATP-contained energy into a lever motion, pulling 2 nucleotides of DNA out of the RuvA tetramer per ATP hydrolyzed, thus driving DNA branch migration. The RuvB motors rotate together with the DNA substrate, which together with the progressing nucleotide cycle form the mechanistic basis for DNA recombination by continuous HJ branch migration. Branch migration allows RuvC to scan DNA until it finds its consensus sequence, where it cleaves and resolves cruciform DNA. The polypeptide is Holliday junction branch migration complex subunit RuvB (Rhodopseudomonas palustris (strain TIE-1)).